An 823-amino-acid chain; its full sequence is Putative ankyrin repeat domain-containing protein 20A2 (823 aa).

5 ANK repeats span residues 66 to 95 (QHRTALHLACASGHVQVVTLLVNRKCQIDV), 99 to 128 (ENRTPLIQAVHCQEEACAVILLEHGANPNL), 132 to 161 (YGNTALHYAVYSESTSLAEKLLSHGAHIEA), 165 to 194 (DNNTPLLFAIICKKEKMVEFLLKRKASSHA), and 198 to 227 (LRRSALMLAVYYDSPGIVNILLKQNIDVFA). 2 disordered regions span residues 301–343 (VPEK…EVED) and 355–402 (VQTL…LSEN). The span at 372–384 (QERHERSEKKQPQ) shows a compositional bias: basic and acidic residues. 3 coiled-coil regions span residues 431–480 (KKLK…KQLE), 565–724 (EMIT…NNST), and 776–805 (LVLEEKSKKLMNECDHLKESLFQYEREKTE).

This chain is Putative ankyrin repeat domain-containing protein 20A2, found in Homo sapiens (Human).